Reading from the N-terminus, the 705-residue chain is Cell cycle serine/threonine-protein kinase CDC5/MSD2 (705 aa).

T23 bears the Phosphothreonine mark. Residues 41–53 (QTKRLDPNNDHHH) are compositionally biased toward basic and acidic residues. The disordered stretch occupies residues 41–63 (QTKRLDPNNDHHHQPAQKKKREK). Positions 82–337 (YHRGHFLGEG…LTEIMDYVWF (256 aa)) constitute a Protein kinase domain. Residues 88–96 (LGEGGFARC) and K110 each bind ATP. D204 acts as the Proton acceptor in catalysis. S419 is subject to Phosphoserine. The 83-residue stretch at 513 to 595 (IVTKWVDYSN…VDFFAKYMKA (83 aa)) folds into the POLO box 1 domain. Positions 553, 569, 609, and 612 each coordinate Zn(2+). The region spanning 614–700 (FLRRYTRYKP…IKEGLKQKST (87 aa)) is the POLO box 2 domain.

Belongs to the protein kinase superfamily. Ser/Thr protein kinase family. CDC5/Polo subfamily. Interacts with CDC48; the interaction is likely to result in CDC5 degradation. Interacts with CSA1.

It localises to the cytoplasm. The protein resides in the cytoskeleton. It is found in the microtubule organizing center. Its subcellular location is the spindle pole body. It carries out the reaction L-seryl-[protein] + ATP = O-phospho-L-seryl-[protein] + ADP + H(+). The enzyme catalyses L-threonyl-[protein] + ATP = O-phospho-L-threonyl-[protein] + ADP + H(+). Protein kinase required for the cell cycle where it is involved in mitotic exit. A component of the fear (CDC14 early anaphase release) network which promotes CDC14 release from the nucleolus during early anaphase. Phosphorylates SCC1/MCD1 and NET1. This Saccharomyces cerevisiae (strain ATCC 204508 / S288c) (Baker's yeast) protein is Cell cycle serine/threonine-protein kinase CDC5/MSD2 (CDC5).